The sequence spans 206 residues: Nucleoside triphosphate pyrophosphatase (206 aa).

The active-site Proton acceptor is aspartate 76.

It belongs to the Maf family. Requires a divalent metal cation as cofactor.

The protein resides in the cytoplasm. It catalyses the reaction a ribonucleoside 5'-triphosphate + H2O = a ribonucleoside 5'-phosphate + diphosphate + H(+). The enzyme catalyses a 2'-deoxyribonucleoside 5'-triphosphate + H2O = a 2'-deoxyribonucleoside 5'-phosphate + diphosphate + H(+). Nucleoside triphosphate pyrophosphatase. May have a dual role in cell division arrest and in preventing the incorporation of modified nucleotides into cellular nucleic acids. This chain is Nucleoside triphosphate pyrophosphatase, found in Streptomyces avermitilis (strain ATCC 31267 / DSM 46492 / JCM 5070 / NBRC 14893 / NCIMB 12804 / NRRL 8165 / MA-4680).